A 275-amino-acid polypeptide reads, in one-letter code: Light-independent protochlorophyllide reductase iron-sulfur ATP-binding protein (275 aa).

Residues 10–15 (GIGKST) and K39 each bind ATP. Mg(2+) is bound at residue S14. [4Fe-4S] cluster contacts are provided by C95 and C129. 180 to 181 (NR) contributes to the ATP binding site.

Belongs to the NifH/BchL/ChlL family. In terms of assembly, homodimer. Protochlorophyllide reductase is composed of three subunits; ChlL, ChlN and ChlB. [4Fe-4S] cluster is required as a cofactor.

It catalyses the reaction chlorophyllide a + oxidized 2[4Fe-4S]-[ferredoxin] + 2 ADP + 2 phosphate = protochlorophyllide a + reduced 2[4Fe-4S]-[ferredoxin] + 2 ATP + 2 H2O. The protein operates within porphyrin-containing compound metabolism; chlorophyll biosynthesis (light-independent). Its function is as follows. Component of the dark-operative protochlorophyllide reductase (DPOR) that uses Mg-ATP and reduced ferredoxin to reduce ring D of protochlorophyllide (Pchlide) to form chlorophyllide a (Chlide). This reaction is light-independent. The L component serves as a unique electron donor to the NB-component of the complex, and binds Mg-ATP. This Gloeobacter violaceus (strain ATCC 29082 / PCC 7421) protein is Light-independent protochlorophyllide reductase iron-sulfur ATP-binding protein.